The chain runs to 483 residues: Threonine synthase-like 2 (483 aa).

An N6-(pyridoxal phosphate)lysine modification is found at K113.

The protein belongs to the threonine synthase family. Requires pyridoxal 5'-phosphate as cofactor.

Acts as a catabolic phospho-lyase on both gamma- and beta-phosphorylated substrates. Degrades O-phospho-threonine (PThr) to alpha-ketobutyrate, ammonia and phosphate. Also degrades O-phospho-homoserine (PHS), but this is not its physiological substrate. The chain is Threonine synthase-like 2 (Thnsl2) from Mus musculus (Mouse).